The chain runs to 124 residues: Darcynin homolog (124 aa).

This sequence belongs to the darcynin family.

The polypeptide is Darcynin homolog (Granulibacter bethesdensis (strain ATCC BAA-1260 / CGDNIH1)).